The chain runs to 123 residues: Large ribosomal subunit protein bL12 (123 aa).

It belongs to the bacterial ribosomal protein bL12 family. In terms of assembly, homodimer. Part of the ribosomal stalk of the 50S ribosomal subunit. Forms a multimeric L10(L12)X complex, where L10 forms an elongated spine to which 2 to 4 L12 dimers bind in a sequential fashion. Binds GTP-bound translation factors.

Forms part of the ribosomal stalk which helps the ribosome interact with GTP-bound translation factors. Is thus essential for accurate translation. The sequence is that of Large ribosomal subunit protein bL12 from Dechloromonas aromatica (strain RCB).